The following is a 549-amino-acid chain: Hydroxylamine reductase (549 aa).

[4Fe-4S] cluster contacts are provided by cysteine 5, cysteine 8, cysteine 17, and cysteine 23. Hybrid [4Fe-2O-2S] cluster is bound by residues histidine 244, glutamate 268, cysteine 312, cysteine 403, cysteine 431, cysteine 456, glutamate 491, and lysine 493. Cysteine 403 bears the Cysteine persulfide mark.

Belongs to the HCP family. It depends on [4Fe-4S] cluster as a cofactor. Hybrid [4Fe-2O-2S] cluster serves as cofactor.

Its subcellular location is the cytoplasm. It catalyses the reaction A + NH4(+) + H2O = hydroxylamine + AH2 + H(+). Its function is as follows. Catalyzes the reduction of hydroxylamine to form NH(3) and H(2)O. The chain is Hydroxylamine reductase from Caldanaerobacter subterraneus subsp. tengcongensis (strain DSM 15242 / JCM 11007 / NBRC 100824 / MB4) (Thermoanaerobacter tengcongensis).